A 396-amino-acid polypeptide reads, in one-letter code: Subtilisin-like protease 5 (396 aa).

The N-terminal stretch at 1-20 (MTGFFTILSFSLAALSVTNA) is a signal peptide. The propeptide occupies 21 to 116 (AQILSVPKGA…VEPDAIISQH (96 aa)). An Inhibitor I9 domain is found at 37-113 (YIVVMKDDTS…VAFVEPDAII (77 aa)). Residues 125–396 (PWGLSRLSNR…SRLLYNGSGR (272 aa)) enclose the Peptidase S8 domain. Active-site charge relay system residues include Asp-156 and His-187. 2 N-linked (GlcNAc...) asparagine glycosylation sites follow: Asn-230 and Asn-248. Residue Ser-342 is the Charge relay system of the active site. Over residues 376 to 389 (PTIRNPGPDTTSRL) the composition is skewed to polar residues. Residues 376–396 (PTIRNPGPDTTSRLLYNGSGR) are disordered. An N-linked (GlcNAc...) asparagine glycan is attached at Asn-392.

Belongs to the peptidase S8 family.

The protein localises to the secreted. Its function is as follows. Secreted subtilisin-like serine protease with keratinolytic activity that contributes to pathogenicity. This Arthroderma benhamiae (strain ATCC MYA-4681 / CBS 112371) (Trichophyton mentagrophytes) protein is Subtilisin-like protease 5 (SUB5).